A 599-amino-acid chain; its full sequence is Afamin (599 aa).

The first 21 residues, 1 to 21, serve as a signal peptide directing secretion; sequence MKLLKLTGFIFFLFFLTESLT. Albumin domains are found at residues 22–210, 211–403, and 404–599; these read LPTQ…IPVT, QYLK…KFNE, and TTEK…KIGN. An N-linked (GlcNAc...) (complex) asparagine glycan is attached at Asn-33. 11 disulfides stabilise this stretch: Cys-77-Cys-86, Cys-99-Cys-114, Cys-113-Cys-124, Cys-148-Cys-193, Cys-192-Cys-201, Cys-224-Cys-270, Cys-269-Cys-277, Cys-289-Cys-303, Cys-302-Cys-313, Cys-340-Cys-385, and Cys-384-Cys-393. Asn-109 is a glycosylation site (N-linked (GlcNAc...) (complex) asparagine). The tract at residues 215–319 is binding pocket for hydrophobic ligands; that stretch reads AFSSYQKHVC…RGQCIINSNK (105 aa). An N-linked (GlcNAc...) (complex) asparagine; atypical glycan is attached at Asn-383. An N-linked (GlcNAc...) (complex) asparagine glycan is attached at Asn-402. 6 disulfide bridges follow: Cys-416-Cys-462, Cys-461-Cys-470, Cys-483-Cys-499, Cys-498-Cys-509, Cys-536-Cys-581, and Cys-580-Cys-589. An N-linked (GlcNAc...) asparagine glycan is attached at Asn-488.

Belongs to the ALB/AFP/VDB family. In terms of assembly, forms a 1:1 complex with Wnt family members; interacts with WNT1, WNT2B, WNT3, WNT3A, WNT5A, WNT7A, WNT7B, WNT8, WNT9A, WNT9B, WNT10A and WNT10B. Post-translationally, N-glycosylated; more than 90% of the glycans are sialylated. High level detected in plasma but also in extravascular fluids such as follicular and cerebrospinal fluids (at protein level).

It localises to the secreted. Its function is as follows. Functions as a carrier for hydrophobic molecules in body fluids. Essential for the solubility and activity of lipidated Wnt family members, including WNT1, WNT2B, WNT3, WNT3A, WNT5A, WNT7A, WNT7B, WNT8, WNT9A, WNT9B, WNT10A and WNT10B. Binds vitamin E. May transport vitamin E in body fluids under conditions where the lipoprotein system is not sufficient. May be involved in the transport of vitamin E across the blood-brain barrier. This is Afamin (AFM) from Homo sapiens (Human).